An 844-amino-acid chain; its full sequence is RING finger containing E3 ubiquitin-protein ligase WSV222 (844 aa).

229–236 lines the ATP pocket; that stretch reads AEDDKGKT. Residues 308–359 form an RING-type; atypical zinc finger; that stretch reads CGVCATSVEEDENEGKTTSLSWYQMNCKHYIHCECLMGMCAAAGNVQCPMCR.

As to quaternary structure, interacts with host UBE2E1/UBCH6; this interaction results in WSV222 auto-ubiquitination. Interacts with host tumor suppressor-like protein.

The catalysed reaction is S-ubiquitinyl-[E2 ubiquitin-conjugating enzyme]-L-cysteine + [acceptor protein]-L-lysine = [E2 ubiquitin-conjugating enzyme]-L-cysteine + N(6)-ubiquitinyl-[acceptor protein]-L-lysine.. Its pathway is protein modification; protein ubiquitination. Probable E3 ubiquitin-protein ligase which accepts ubiquitin from the E2 ubiquitin-conjugating enzyme UBE2E1/UBCH6 in the form of a thioester and then directly transfers the ubiquitin to targeted substrates. Mediates ubiquitination of host tumor-suppressor-like protein (TSL) targeting it for degradation. Might function as an anti-apoptosis protein by counteracting TSL-induced apoptosis. The protein is RING finger containing E3 ubiquitin-protein ligase WSV222 of White spot syndrome virus (isolate Shrimp/China/Tongan/1996) (WSSV).